Reading from the N-terminus, the 212-residue chain is uncharacterized protein (212 aa).

An SIS domain is found at 46–198 (LERVYREKRK…IYSLMTRLGI (153 aa)).

This sequence belongs to the SIS family. PHI subfamily.

This is an uncharacterized protein from Aeropyrum pernix (strain ATCC 700893 / DSM 11879 / JCM 9820 / NBRC 100138 / K1).